The sequence spans 155 residues: Putative protein p31 (155 aa).

The polypeptide is Putative protein p31 (31) (Acyrthosiphon pisum secondary endosymbiont phage 1 (Bacteriophage APSE-1)).